A 518-amino-acid polypeptide reads, in one-letter code: Metal transporter Nramp1 (518 aa).

The next 12 membrane-spanning stretches (helical) occupy residues 35–55 (FLSH…PGNM), 68–88 (ELLW…SLSA), 107–127 (PVWV…ASDI), 131–151 (IGTG…GVLI), 172–192 (VVVA…MSIV), 218–238 (IALL…ALVL), 255–275 (FFLF…IAII), 315–337 (SATV…GTYA), 357–377 (LMTR…GGSS), 382–402 (LIVI…IPLL), 418–438 (IYIV…NIYF), and 458–478 (VLIG…VIYL).

This sequence belongs to the NRAMP (TC 2.A.55) family.

It is found in the membrane. Probable metal transporter that may participate in the control of iron homeostasis. The chain is Metal transporter Nramp1 (NRAMP1) from Oryza sativa subsp. japonica (Rice).